We begin with the raw amino-acid sequence, 1213 residues long: Oligopeptidase PhomG' (1213 aa).

Histidine 447 contacts Zn(2+). Glutamate 448 is an active-site residue. 2 residues coordinate Zn(2+): histidine 451 and histidine 454.

It belongs to the peptidase M3 family. As to quaternary structure, monomer. The cofactor is Zn(2+).

The protein operates within mycotoxin biosynthesis. Oligopeptidase; part of the gene cluster that mediates the biosynthesis of the phomopsins, a group of hexapeptide mycotoxins which infects lupins and causes lupinosis disease in livestock. Within the pathway, phomG and phomG' are probably involved in the processing of the phomA and phomA' precursors. The pathway starts with the processing of the precursor phomA by several endopeptidases including kexin proteases as well as the cluster-specific S41 family peptidase phomP1 and the oligopeptidase phomG to produce 10 identical copies of the hexapeptide Tyr-Val-Ile-Pro-Ile-Asp. After being excised from the precursor peptide, the core peptides are cyclized and modified post-translationally by enzymes encoded within the gene cluster. The timing and order of proteolysis of the phomA precursor and PTMs are still unknown. Two tyrosinase-like enzymes, phomQ1 and phomQ2, catalyze the chlorination and hydroxylation of Tyr, respectively. PhomYb, is proposed to be involved in the construction of the macrocyclic structure. The other 4 ustYa family proteins may be involved in PTMs that generate the unique structure of phomopsin A. PhomYa is required for the hydroxylation of C-beta of Tyr. PhomYc, phomYd, and phomYe are responsible for the biosynthesis of 2,3-dehydroisoleucine (dIle), 2,3-dehydroaspartic acid (dAsp), and 3,4-dehydroproline (dPro), respectively. While dIle formation by phomYc is indispensable for the installation of dAsp by phomYd, the order of the other PTMs have not been elucidated yet. Most of the biosynthetic enzymes likely have broad substrate specificity, and thus, there might be a metabolic grid from a precursor to phomopsin A. The enzyme(s) responsible for the biosynthesis of 3,4-dehydrovaline (dVal) have also not been identified yet. Finally, phomM acts as an S-adenosylmethionine-dependent alpha-N-methyltransferase that catalyzes two successive N-methylation reactions, converting N-desmethyl-phomopsin A to phomopsin A and phomopsin A further to an N,N-dimethylated congener called phomopsin E. This is Oligopeptidase PhomG' from Diaporthe leptostromiformis (Lupinosis disease fungus).